Consider the following 77-residue polypeptide: U8-lycotoxin-Ls1d (77 aa).

The signal sequence occupies residues 1–20 (MKLIIFTGLVLFAIVSLIEA). Residues 21-26 (QAENEK) constitute a propeptide that is removed on maturation.

It belongs to the neurotoxin 19 (CSTX) family. 08 (U8-Lctx) subfamily. Contains 4 disulfide bonds. Expressed by the venom gland.

The protein resides in the secreted. This chain is U8-lycotoxin-Ls1d, found in Lycosa singoriensis (Wolf spider).